The primary structure comprises 223 residues: Octanoyltransferase (223 aa).

The BPL/LPL catalytic domain occupies 32–207 (DETPDEIWLV…HFAHHLAITD (176 aa)). Substrate is bound by residues 71 to 78 (RGGQVTYH), 138 to 140 (SLG), and 151 to 153 (GLA). The active-site Acyl-thioester intermediate is Cys169.

The protein belongs to the LipB family.

The protein localises to the cytoplasm. The enzyme catalyses octanoyl-[ACP] + L-lysyl-[protein] = N(6)-octanoyl-L-lysyl-[protein] + holo-[ACP] + H(+). The protein operates within protein modification; protein lipoylation via endogenous pathway; protein N(6)-(lipoyl)lysine from octanoyl-[acyl-carrier-protein]: step 1/2. In terms of biological role, catalyzes the transfer of endogenously produced octanoic acid from octanoyl-acyl-carrier-protein onto the lipoyl domains of lipoate-dependent enzymes. Lipoyl-ACP can also act as a substrate although octanoyl-ACP is likely to be the physiological substrate. This Erwinia tasmaniensis (strain DSM 17950 / CFBP 7177 / CIP 109463 / NCPPB 4357 / Et1/99) protein is Octanoyltransferase.